Here is a 211-residue protein sequence, read N- to C-terminus: FMN-dependent NADH:quinone oxidoreductase (211 aa).

FMN is bound by residues 17–19 and 102–105; these read SYS and MWNF.

This sequence belongs to the azoreductase type 1 family. Homodimer. It depends on FMN as a cofactor.

The catalysed reaction is 2 a quinone + NADH + H(+) = 2 a 1,4-benzosemiquinone + NAD(+). The enzyme catalyses N,N-dimethyl-1,4-phenylenediamine + anthranilate + 2 NAD(+) = 2-(4-dimethylaminophenyl)diazenylbenzoate + 2 NADH + 2 H(+). In terms of biological role, quinone reductase that provides resistance to thiol-specific stress caused by electrophilic quinones. Functionally, also exhibits azoreductase activity. Catalyzes the reductive cleavage of the azo bond in aromatic azo compounds to the corresponding amines. The protein is FMN-dependent NADH:quinone oxidoreductase of Geobacillus kaustophilus (strain HTA426).